The chain runs to 197 residues: Adenylylsulfatase HINT3 (197 aa).

Residues 14 to 43 (NPPGPNPTRDPTLRVSDCSSGSSGDGKVES) are disordered. The region spanning 51 to 158 (VFCKIIRGES…IPRKERDCLW (108 aa)) is the HIT domain. The short motif at 143-147 (HTHIH) is the Histidine triad motif element. Histidine 145 serves as the catalytic Tele-AMP-histidine intermediate. A substrate-binding site is contributed by histidine 147.

It localises to the peroxisome. The catalysed reaction is adenosine 5'-phosphosulfate + H2O = sulfate + AMP + 2 H(+). Its function is as follows. Possesses adenylylsulfatase activity in vitro. In Arabidopsis thaliana (Mouse-ear cress), this protein is Adenylylsulfatase HINT3.